A 443-amino-acid chain; its full sequence is MFLPQEIIRKKRNGEALSTQEIQFFVQGITNNTIGEGQIAALAMAVYFKDMTMDERVALTCAMRDSGMVLNWEHLNLGGPIVDKHSTGGVGDVVSLMLGPMVAACGGFVPMISGRGLGHTGGTLDKLDAIPGYQTSVDNDRFLKVVKEAGVAIIGQTGDLAPADKRIYAVRDITATVESIAMITGSILSKKLASGLEALVMDVKVGSGAFMPTFEASEELAKSIVAVANGAGCRTSALLTDMNQVLASSAGNGVEVREAVRYLTGEYRNPRIHEVTMSLCAEMLISAHLASDDADARRKLQAVLDNGKAAEIFGRMVTGLGGPSDFMERYDSYLPKAAIVRPVYAANAGFVTAMDTRELGLAVVAMGGGRRAAGDKLDYAVGLTDFIRLGQSVDADKPLALIHAQTEDQFAQAASMVQAAVKIGDTQPQALPEVYRRIGLADL.

It belongs to the thymidine/pyrimidine-nucleoside phosphorylase family. In terms of assembly, homodimer.

It catalyses the reaction thymidine + phosphate = 2-deoxy-alpha-D-ribose 1-phosphate + thymine. Its pathway is pyrimidine metabolism; dTMP biosynthesis via salvage pathway; dTMP from thymine: step 1/2. Functionally, the enzymes which catalyze the reversible phosphorolysis of pyrimidine nucleosides are involved in the degradation of these compounds and in their utilization as carbon and energy sources, or in the rescue of pyrimidine bases for nucleotide synthesis. The chain is Thymidine phosphorylase from Aeromonas salmonicida (strain A449).